The sequence spans 318 residues: Pyrimidine-specific ribonucleoside hydrolase RihA (318 aa).

The active site involves H240.

It belongs to the IUNH family. RihA subfamily.

Hydrolyzes cytidine or uridine to ribose and cytosine or uracil, respectively. The sequence is that of Pyrimidine-specific ribonucleoside hydrolase RihA from Shewanella oneidensis (strain ATCC 700550 / JCM 31522 / CIP 106686 / LMG 19005 / NCIMB 14063 / MR-1).